A 504-amino-acid polypeptide reads, in one-letter code: Glucose-6-phosphate isomerase (504 aa).

Glu-333 (proton donor) is an active-site residue. Residues His-364 and Lys-473 contribute to the active site.

Belongs to the GPI family.

It localises to the cytoplasm. It carries out the reaction alpha-D-glucose 6-phosphate = beta-D-fructose 6-phosphate. It participates in carbohydrate biosynthesis; gluconeogenesis. Its pathway is carbohydrate degradation; glycolysis; D-glyceraldehyde 3-phosphate and glycerone phosphate from D-glucose: step 2/4. Catalyzes the reversible isomerization of glucose-6-phosphate to fructose-6-phosphate. The chain is Glucose-6-phosphate isomerase from Stenotrophomonas maltophilia (strain R551-3).